Consider the following 1194-residue polypeptide: Immunoglobulin superfamily member 3 (1194 aa).

Residues 1–19 form the signal peptide; sequence MKCFFPVLSCLAVLGVVSA. Ig-like C2-type domains lie at 20 to 138, 143 to 262, 276 to 386, 401 to 539, 545 to 661, 676 to 803, 813 to 945, and 949 to 1097; these read QRQV…AKMN, PDSL…WYAM, PTDK…KTVT, PIVV…VSIT, FAVT…WTRL, PVTK…EEVS, PDSR…TAVT, and PDAA…YRLT. The Extracellular portion of the chain corresponds to 20 to 1124; sequence QRQVTVQEGP…LQSLICSNDA (1105 aa). Intrachain disulfides connect cysteine 42–cysteine 120 and cysteine 167–cysteine 246. Asparagine 43 is a glycosylation site (N-linked (GlcNAc...) asparagine). The EWI motif signature appears at 250 to 252; the sequence is EWI. The cysteines at positions 302 and 376 are disulfide-linked. Asparagine 418 carries N-linked (GlcNAc...) asparagine glycosylation. Disulfide bonds link cysteine 432/cysteine 511, cysteine 566/cysteine 645, cysteine 701/cysteine 782, cysteine 838/cysteine 918, and cysteine 974/cysteine 1080. A glycan (N-linked (GlcNAc...) asparagine) is linked at asparagine 842. Residues 997–1030 are disordered; that stretch reads GGGKRGSLGIDEQEEEEEEEDISQEEDSEDPTER. Positions 1007–1026 are enriched in acidic residues; it reads DEQEEEEEEEDISQEEDSED. A glycan (N-linked (GlcNAc...) asparagine) is linked at asparagine 1077. A helical transmembrane segment spans residues 1125 to 1145; sequence LFYFVFFYPFPIFGILIITIL. Residues 1146-1194 are Cytoplasmic-facing; it reads LVRFKSRNSSKNSEGKNGVPLLWIKEPHLNYSPTCLEPPVLSIHPGAID.

As to expression, expressed in the lacrimal duct and lacrimal gland.

The protein localises to the membrane. The chain is Immunoglobulin superfamily member 3 (Igsf3) from Mus musculus (Mouse).